The sequence spans 211 residues: Metalloproteinase inhibitor 3 (211 aa).

The first 23 residues, 1-23 (MTPWLGLVVLLSCWSLGHWGAEA), serve as a signal peptide directing secretion. Cys24 is a Zn(2+) binding site. 2 involved in metalloproteinase-binding regions span residues 24–27 (CTCS) and 88–89 (ES). 6 disulfides stabilise this stretch: Cys24-Cys91, Cys26-Cys118, Cys36-Cys143, Cys145-Cys192, Cys150-Cys155, and Cys163-Cys184. An NTR domain is found at 24–143 (CTCSPSHPQD…GLNYRYHLGC (120 aa)). The tract at residues 105-188 (TGRVYEGKMY…SKHYACIRQK (84 aa)) is mediates interaction with EFEMP1.

This sequence belongs to the protease inhibitor I35 (TIMP) family. As to quaternary structure, interacts with EFEMP1. Interacts with KDR. Highest levels are found in kidney, lung and brain followed by ovary and uterus. Low levels are found in bone.

It localises to the secreted. It is found in the extracellular space. The protein localises to the extracellular matrix. Mediates a variety of processes including matrix regulation and turnover, inflammation, and angiogenesis, through reversible inhibition of zinc protease superfamily enzymes, primarily matrix metalloproteinases (MMPs). Regulates extracellular matrix (ECM) remodeling through inhibition of matrix metalloproteinases (MMP) including MMP-1, MMP-2, MMP-3, MMP-7, MMP-9, MMP-13, MMP-14 and MMP-15. Additionally, modulates the processing of amyloid precursor protein (APP) and apolipoprotein E receptor ApoER2 by inhibiting two alpha-secretases ADAM10 and ADAM17. Functions as a tumor suppressor and a potent inhibitor of angiogenesis. Exerts its anti-angiogenic effect by directly interacting with vascular endothelial growth factor (VEGF) receptor-2/KDR, preventing its binding to the VEGFA ligand. Selectively induces apoptosis in angiogenic endothelial cells through a caspase-independent cell death pathway. Mechanistically, inhibits matrix-induced focal adhesion kinase PTK2 tyrosine phosphorylation and association with paxillin/PXN and disrupts the incorporation of ITGB3, PTK2 and PXN into focal adhesion contacts on the matrix. The chain is Metalloproteinase inhibitor 3 (Timp3) from Mus musculus (Mouse).